Reading from the N-terminus, the 262-residue chain is Transcription factor Spi-B (262 aa).

Residues 1–31 (MLALEAAQLDGPHFSCLYPDGVFYDLDSCKH) are TAD1 (Acidic). The interval 41-61 (PDSLWDWTVAPPVPATPYEAF) is TAD2. Residues 140 to 163 (ALEVSDSESDEALVAGPEGKGSEA) form a disordered region. Positions 169–252 (LRLYQFLLGL…VKRKLTYQFD (84 aa)) form a DNA-binding region, ETS.

This sequence belongs to the ETS family. In terms of assembly, can form homotypic interactions. Interacts with IRF4/Pip. Interacts with JUN. Interacts with TBP. May also interact with CREBBP and EP300. Interacts with NONO/p54(nrb). As to expression, expressed in plasmacytoid dendritic cells (pDCs) and B-cells, not expressed in T-cells or granulocytes. May also be enriched in stem cell populations of the liver.

It is found in the nucleus. The protein resides in the cytoplasm. Sequence specific transcriptional activator which binds to the PU-box, a purine-rich DNA sequence (5'-GAGGAA-3') that can act as a lymphoid-specific enhancer. Promotes development of plasmacytoid dendritic cells (pDCs), also known as type 2 DC precursors (pre-DC2) or natural interferon (IFN)-producing cells. These cells have the capacity to produce large amounts of interferon and block viral replication. May be required for B-cell receptor (BCR) signaling, which is necessary for normal B-cell development and antigenic stimulation. In Homo sapiens (Human), this protein is Transcription factor Spi-B (SPIB).